Here is a 93-residue protein sequence, read N- to C-terminus: Large ribosomal subunit protein uL23cz/uL23cy (93 aa).

It belongs to the universal ribosomal protein uL23 family. As to quaternary structure, part of the 50S ribosomal subunit.

The protein localises to the plastid. It is found in the chloroplast. Binds to 23S rRNA. The polypeptide is Large ribosomal subunit protein uL23cz/uL23cy (rpl23-A) (Lotus japonicus (Lotus corniculatus var. japonicus)).